Consider the following 137-residue polypeptide: Ribosome-binding factor A (137 aa).

It belongs to the RbfA family. As to quaternary structure, monomer. Binds 30S ribosomal subunits, but not 50S ribosomal subunits or 70S ribosomes.

It is found in the cytoplasm. In terms of biological role, one of several proteins that assist in the late maturation steps of the functional core of the 30S ribosomal subunit. Associates with free 30S ribosomal subunits (but not with 30S subunits that are part of 70S ribosomes or polysomes). Required for efficient processing of 16S rRNA. May interact with the 5'-terminal helix region of 16S rRNA. This is Ribosome-binding factor A from Erwinia tasmaniensis (strain DSM 17950 / CFBP 7177 / CIP 109463 / NCPPB 4357 / Et1/99).